The primary structure comprises 243 residues: Protein unc-119 homolog B (243 aa).

Polar residues predominate over residues 1-21; it reads MNSQSSRNETAATAVNGSDSA. The interval 1-49 is disordered; sequence MNSQSSRNETAATAVNGSDSAAASRDHKSGGGVLKRLKSRRNQVDRRPV. Tyr134 is a binding site for tetradecanoate.

Belongs to the PDE6D/unc-119 family. Detected in embryo. Detected in larvae four days after fertilization, in retina and neural tissues (at protein level). Detected in embryos at the sphere stage, during gastrulation, somitogenesis and in swimming larvae, both within and outside of the developing nervous system. Detected in adults.

Its subcellular location is the cell projection. It localises to the cilium. Myristoyl-binding protein that acts as a cargo adapter: specifically binds the myristoyl moiety of a subset of N-terminally myristoylated proteins and is required for their localization. Plays a key role in localization of proteins to the primary cilium membrane. This chain is Protein unc-119 homolog B (unc119b), found in Danio rerio (Zebrafish).